A 376-amino-acid polypeptide reads, in one-letter code: ATP phosphoribosyltransferase regulatory subunit (376 aa).

The protein belongs to the class-II aminoacyl-tRNA synthetase family. HisZ subfamily. Heteromultimer composed of HisG and HisZ subunits.

Its subcellular location is the cytoplasm. It participates in amino-acid biosynthesis; L-histidine biosynthesis; L-histidine from 5-phospho-alpha-D-ribose 1-diphosphate: step 1/9. Its function is as follows. Required for the first step of histidine biosynthesis. May allow the feedback regulation of ATP phosphoribosyltransferase activity by histidine. The protein is ATP phosphoribosyltransferase regulatory subunit of Brucella ovis (strain ATCC 25840 / 63/290 / NCTC 10512).